The chain runs to 904 residues: Trichohyalin-like protein 1 (904 aa).

One can recognise an EF-hand domain in the interval 48-83 (CVLHAVEKNSNLLNIDSNGIISFDEFVLAIFNLLNL). Disordered regions lie at residues 102–792 (PEKE…CSVE) and 858–890 (PYTR…HPQR). Residues 113 to 128 (QATTGDGQWTVGTSPT) are compositionally biased toward polar residues. 5 stretches are compositionally biased toward basic and acidic residues: residues 172-185 (ASEH…HLEG), 222-240 (TERK…EPAR), 268-300 (ATQR…DEPS), 349-371 (NLGE…ETKD), and 385-398 (SDMR…RGPE). Polar residues predominate over residues 443-452 (ETQYLSSEGG). Over residues 524-536 (VEEEDGYQGEDPE) the composition is skewed to acidic residues. Positions 538–554 (PFTQSDEGSSETPNSLA) are enriched in polar residues. Positions 555 to 578 (SEEGNSSSETGELPVQGDSQSQGD) are enriched in low complexity. Over residues 586–598 (GGHNNNPDTQRQG) the composition is skewed to polar residues. Basic and acidic residues predominate over residues 759 to 770 (GDQKSPAKKEHN). Residues 771 to 780 (SSVPWSSLEK) are compositionally biased toward polar residues. Residues 881 to 890 (LEDKQGHPQR) show a composition bias toward basic and acidic residues.

Belongs to the S-100 family.

The polypeptide is Trichohyalin-like protein 1 (TCHHL1) (Homo sapiens (Human)).